A 504-amino-acid chain; its full sequence is Sodium-coupled neutral amino acid transporter 3 (504 aa).

The N-linked (GlcNAc...) asparagine glycan is linked to Asn74. A run of 5 helical transmembrane segments spans residues 83 to 103 (GILGLAYAMANTGIILFLFLL), 106 to 126 (VALLSSYSIHLLLKSSGVVGI), 144 to 164 (AAALAITLQNIGAMSSYLYII), 187 to 207 (MNGNYLVILVSVTIILPLALM), and 213 to 233 (LGYSSGFSLSCMVFFLIAVIY). Cysteines 240 and 275 form a disulfide. N-linked (GlcNAc...) asparagine glycosylation is found at Asn247, Asn248, Asn252, and Asn323. Helical transmembrane passes span 324–344 (LSIAVMYIMYFLAALFGYLTF), 366–386 (ILCVRVAVLTAVTLTVPIVLF), 408–428 (VLIAVGLLTCINLLVIFAPNI), 431–451 (IFGVIGATSAPFLIFIFPAIF), and 471–491 (ALCFAMLGFLLMTMSLSFIII).

This sequence belongs to the amino acid/polyamine transporter 2 family.

It is found in the cell membrane. Its subcellular location is the basolateral cell membrane. It catalyses the reaction L-glutamine(out) + Na(+)(out) + H(+)(in) = L-glutamine(in) + Na(+)(in) + H(+)(out). The enzyme catalyses L-asparagine(out) + Na(+)(out) + H(+)(in) = L-asparagine(in) + Na(+)(in) + H(+)(out). The catalysed reaction is L-histidine(out) + Na(+)(out) + H(+)(in) = L-histidine(in) + Na(+)(in) + H(+)(out). Functionally, symporter that cotransports specific neutral amino acids and sodium ions, coupled to an H(+) antiporter activity. Mainly participates in the glutamate-GABA-glutamine cycle in brain where it transports L-glutamine from astrocytes in the intercellular space for the replenishment of both neurotransmitters glutamate and gamma-aminobutyric acid (GABA) in neurons and also functions as the major influx transporter in ganglion cells mediating the uptake of glutamine. The transport activity is specific for L-glutamine, L-histidine and L-asparagine. The transport is electroneutral coupled to the cotransport of 1 Na(+) and the antiport of 1 H(+). The transport is pH dependent, saturable, Li(+) tolerant and functions in both direction depending on the concentration gradients of its substrates and cotransported ions. Also mediates an amino acid-gated H(+) conductance that is not stoichiometrically coupled to the amino acid transport but which influences the ionic gradients that drive the amino acid transport. In addition, may play a role in nitrogen metabolism, amino acid homeostasis, glucose metabolism and renal ammoniagenesis. This chain is Sodium-coupled neutral amino acid transporter 3, found in Homo sapiens (Human).